Here is a 20-residue protein sequence, read N- to C-terminus: Non-secretory ribonuclease (20 aa).

The active-site Proton acceptor is histidine 16.

The protein belongs to the pancreatic ribonuclease family. Interacts with and forms a tight 1:1 complex with RNH1. Dimerization of two such complexes may occur.

Its subcellular location is the lysosome. The protein localises to the cytoplasmic granule. The catalysed reaction is an [RNA] containing cytidine + H2O = an [RNA]-3'-cytidine-3'-phosphate + a 5'-hydroxy-ribonucleotide-3'-[RNA].. It carries out the reaction an [RNA] containing uridine + H2O = an [RNA]-3'-uridine-3'-phosphate + a 5'-hydroxy-ribonucleotide-3'-[RNA].. Functionally, this is a non-secretory ribonuclease. It is a pyrimidine specific nuclease with a slight preference for U. Cytotoxin and helminthotoxin. Possesses a wide variety of biological activities. This chain is Non-secretory ribonuclease (RNASE2), found in Sus scrofa (Pig).